Here is a 367-residue protein sequence, read N- to C-terminus: Probable butyrate kinase (367 aa).

It belongs to the acetokinase family.

It is found in the cytoplasm. The catalysed reaction is butanoate + ATP = butanoyl phosphate + ADP. This is Probable butyrate kinase from Exiguobacterium sibiricum (strain DSM 17290 / CCUG 55495 / CIP 109462 / JCM 13490 / 255-15).